The primary structure comprises 169 residues: Ribosomal RNA large subunit methyltransferase H (169 aa).

S-adenosyl-L-methionine contacts are provided by residues leucine 85, glycine 117, and 136 to 141; that span reads LGELTW.

Belongs to the RNA methyltransferase RlmH family. Homodimer.

The protein resides in the cytoplasm. The enzyme catalyses pseudouridine(1915) in 23S rRNA + S-adenosyl-L-methionine = N(3)-methylpseudouridine(1915) in 23S rRNA + S-adenosyl-L-homocysteine + H(+). Specifically methylates the pseudouridine at position 1915 (m3Psi1915) in 23S rRNA. This Brucella abortus biovar 1 (strain 9-941) protein is Ribosomal RNA large subunit methyltransferase H.